We begin with the raw amino-acid sequence, 390 residues long: DNA polymerase IV (390 aa).

Residues 6–187 (VMHVDLDAFF…LDIAVMPGIG (182 aa)) enclose the UmuC domain. Aspartate 10 and aspartate 105 together coordinate Mg(2+). Glutamate 106 is a catalytic residue.

It belongs to the DNA polymerase type-Y family. Monomer. Requires Mg(2+) as cofactor.

It is found in the cytoplasm. It catalyses the reaction DNA(n) + a 2'-deoxyribonucleoside 5'-triphosphate = DNA(n+1) + diphosphate. Functionally, poorly processive, error-prone DNA polymerase involved in untargeted mutagenesis. Copies undamaged DNA at stalled replication forks, which arise in vivo from mismatched or misaligned primer ends. These misaligned primers can be extended by PolIV. Exhibits no 3'-5' exonuclease (proofreading) activity. May be involved in translesional synthesis, in conjunction with the beta clamp from PolIII. This chain is DNA polymerase IV, found in Dehalococcoides mccartyi (strain CBDB1).